We begin with the raw amino-acid sequence, 768 residues long: Calcium up-regulated protein G (768 aa).

Residues 1–22 form a disordered region; it reads MINIEDISKSSNQSEEKQLKST. Ricin B-type lectin domains lie at 1-107 and 100-248; these read MINI…WTID and KTQI…WGIN.

Belongs to the cup family.

The protein resides in the cytoplasm. Its subcellular location is the membrane. May play an important role in stabilizing and/or regulating the cell membrane during Ca(2+) stress or certain stages of development. The protein is Calcium up-regulated protein G (cupG) of Dictyostelium discoideum (Social amoeba).